We begin with the raw amino-acid sequence, 313 residues long: Methionyl-tRNA formyltransferase (313 aa).

A (6S)-5,6,7,8-tetrahydrofolate-binding site is contributed by 113-116 (SLLP).

The protein belongs to the Fmt family.

The enzyme catalyses L-methionyl-tRNA(fMet) + (6R)-10-formyltetrahydrofolate = N-formyl-L-methionyl-tRNA(fMet) + (6S)-5,6,7,8-tetrahydrofolate + H(+). Functionally, attaches a formyl group to the free amino group of methionyl-tRNA(fMet). The formyl group appears to play a dual role in the initiator identity of N-formylmethionyl-tRNA by promoting its recognition by IF2 and preventing the misappropriation of this tRNA by the elongation apparatus. The chain is Methionyl-tRNA formyltransferase from Francisella tularensis subsp. tularensis (strain FSC 198).